The following is a 1045-amino-acid chain: Desmoglein-1 (1045 aa).

The first 23 residues, 1–23, serve as a signal peptide directing secretion; sequence MNWPFFRTAAVLFIFLVVLEVNS. A propeptide spanning residues 24–49 is cleaved from the precursor; it reads EFRIQVRDYNTKNGTIKWHSIRRQKR. 3 N-linked (GlcNAc...) asparagine glycosylation sites follow: N36, N110, and N180. 4 Cadherin domains span residues 50-158, 159-270, 271-385, and 386-496; these read EWIK…PVFS, MSTF…PYME, LPSN…GSVF, and RPGS…TDGA. Residues 50–546 are Extracellular-facing; that stretch reads EWIKFAAACR…HPLDNVHFGP (497 aa). A helical transmembrane segment spans residues 547-567; sequence AGIGLLIMGFLVLGLVPFLLM. Topologically, residues 568–1045 are cytoplasmic; that stretch reads YCDCGGAPGG…TKYSTVQYTK (478 aa). Desmoglein repeat repeat units lie at residues 814–840, 841–870, 871–900, 901–928, and 929–957; these read TYPSGPGVHHPMPIPDPLSYGNVTMTE, SYTTSGILKPSVHVHDNRQASNVVVTERVV, GPISGANLHGMLEMPDLRDGSNVIVTERVI, APNSSLPTTLTIPDPRESSNVVVTERVI, and RPTSGIVGNLSMHPDISNTHNVIVTERVV. The segment at 1019 to 1045 is disordered; sequence FSNTLGSASPTTTRSRITKYSTVQYTK. Residues 1020 to 1045 are compositionally biased toward polar residues; that stretch reads SNTLGSASPTTTRSRITKYSTVQYTK.

In terms of assembly, binds to JUP/plakoglobin. Interacts with PKP2. Interacts with DSC3; there is evidence to suggest that the interaction promotes cell-cell adhesion of keratinocytes.

Its subcellular location is the cell membrane. The protein localises to the cell junction. It localises to the desmosome. The protein resides in the cytoplasm. It is found in the nucleus. Its function is as follows. Component of intercellular desmosome junctions. Involved in the interaction of plaque proteins and intermediate filaments mediating cell-cell adhesion. The sequence is that of Desmoglein-1 (DSG1) from Sus scrofa (Pig).